The chain runs to 84 residues: Large ribosomal subunit protein bL27 (84 aa).

The disordered stretch occupies residues 1-20; it reads MAHKKAGGSTRNGRDSNPKY.

The protein belongs to the bacterial ribosomal protein bL27 family.

The chain is Large ribosomal subunit protein bL27 from Francisella philomiragia subsp. philomiragia (strain ATCC 25017 / CCUG 19701 / FSC 153 / O#319-036).